The following is a 348-amino-acid chain: Succinylglutamate desuccinylase (348 aa).

Zn(2+)-binding residues include His64, Glu67, and His164. Residue Glu228 is part of the active site.

The protein belongs to the AspA/AstE family. Succinylglutamate desuccinylase subfamily. It depends on Zn(2+) as a cofactor.

The enzyme catalyses N-succinyl-L-glutamate + H2O = L-glutamate + succinate. The protein operates within amino-acid degradation; L-arginine degradation via AST pathway; L-glutamate and succinate from L-arginine: step 5/5. Transforms N(2)-succinylglutamate into succinate and glutamate. The sequence is that of Succinylglutamate desuccinylase from Shewanella amazonensis (strain ATCC BAA-1098 / SB2B).